Reading from the N-terminus, the 239-residue chain is Probable transcriptional regulatory protein BCQ_0605 (239 aa).

It belongs to the TACO1 family. YeeN subfamily.

It localises to the cytoplasm. This is Probable transcriptional regulatory protein BCQ_0605 from Bacillus cereus (strain Q1).